Consider the following 185-residue polypeptide: Ribosome-recycling factor (185 aa).

It belongs to the RRF family.

The protein resides in the cytoplasm. Functionally, responsible for the release of ribosomes from messenger RNA at the termination of protein biosynthesis. May increase the efficiency of translation by recycling ribosomes from one round of translation to another. The sequence is that of Ribosome-recycling factor from Klebsiella pneumoniae (strain 342).